Here is a 231-residue protein sequence, read N- to C-terminus: Large ribosomal subunit protein uL1 (231 aa).

This sequence belongs to the universal ribosomal protein uL1 family. In terms of assembly, part of the 50S ribosomal subunit.

In terms of biological role, binds directly to 23S rRNA. The L1 stalk is quite mobile in the ribosome, and is involved in E site tRNA release. Its function is as follows. Protein L1 is also a translational repressor protein, it controls the translation of the L11 operon by binding to its mRNA. The sequence is that of Large ribosomal subunit protein uL1 from Mesomycoplasma hyopneumoniae (strain 232) (Mycoplasma hyopneumoniae).